Consider the following 139-residue polypeptide: Gastrula zinc finger protein XlCGF29.1 (139 aa).

C2H2-type zinc fingers lie at residues 6 to 28 (FTCT…LLIH), 34 to 56 (FDST…LSTH), 62 to 84 (FVCT…LHSH), 90 to 112 (FPCS…LRHH), and 117 to 139 (FPCT…QMIH).

This sequence belongs to the krueppel C2H2-type zinc-finger protein family.

The protein localises to the nucleus. May be involved in transcriptional regulation. This is Gastrula zinc finger protein XlCGF29.1 from Xenopus laevis (African clawed frog).